Reading from the N-terminus, the 443-residue chain is ATP-dependent protease ATPase subunit HslU (443 aa).

ATP is bound by residues Ile18 and 60 to 65; that span reads GVGKTE. Residues 137–156 are disordered; sequence PPPRDAWGQNEQSEDTSNTR. Positions 145-156 are enriched in polar residues; the sequence is QNEQSEDTSNTR. Asp256, Glu321, and Arg393 together coordinate ATP.

It belongs to the ClpX chaperone family. HslU subfamily. A double ring-shaped homohexamer of HslV is capped on each side by a ring-shaped HslU homohexamer. The assembly of the HslU/HslV complex is dependent on binding of ATP.

It localises to the cytoplasm. In terms of biological role, ATPase subunit of a proteasome-like degradation complex; this subunit has chaperone activity. The binding of ATP and its subsequent hydrolysis by HslU are essential for unfolding of protein substrates subsequently hydrolyzed by HslV. HslU recognizes the N-terminal part of its protein substrates and unfolds these before they are guided to HslV for hydrolysis. This is ATP-dependent protease ATPase subunit HslU from Vibrio vulnificus (strain YJ016).